Here is a 226-residue protein sequence, read N- to C-terminus: Eukaryotic translation initiation factor 3 subunit K (226 aa).

The region spanning 42–200 (YNLDANLSLL…QLIVLPRNEF (159 aa)) is the PCI domain.

The protein belongs to the eIF-3 subunit K family. As to quaternary structure, component of the eukaryotic translation initiation factor 3 (eIF-3) complex.

Its subcellular location is the cytoplasm. Its function is as follows. Component of the eukaryotic translation initiation factor 3 (eIF-3) complex, which is involved in protein synthesis of a specialized repertoire of mRNAs and, together with other initiation factors, stimulates binding of mRNA and methionyl-tRNAi to the 40S ribosome. The eIF-3 complex specifically targets and initiates translation of a subset of mRNAs involved in cell proliferation. This is Eukaryotic translation initiation factor 3 subunit K (TIF3K1) from Oryza sativa subsp. japonica (Rice).